We begin with the raw amino-acid sequence, 175 residues long: NADH-ubiquinone oxidoreductase chain 6 (175 aa).

5 helical membrane-spanning segments follow: residues 1-21 (MMTY…VGFA), 25-45 (SPIY…AIVL), 47-67 (FGGS…MLVV), 88-108 (AVLA…CYIL), and 149-169 (YGTW…LVIM).

The protein belongs to the complex I subunit 6 family. As to quaternary structure, core subunit of respiratory chain NADH dehydrogenase (Complex I) which is composed of 45 different subunits.

The protein resides in the mitochondrion inner membrane. The enzyme catalyses a ubiquinone + NADH + 5 H(+)(in) = a ubiquinol + NAD(+) + 4 H(+)(out). In terms of biological role, core subunit of the mitochondrial membrane respiratory chain NADH dehydrogenase (Complex I) which catalyzes electron transfer from NADH through the respiratory chain, using ubiquinone as an electron acceptor. Essential for the catalytic activity and assembly of complex I. This chain is NADH-ubiquinone oxidoreductase chain 6 (MT-ND6), found in Canis lupus familiaris (Dog).